The following is a 159-amino-acid chain: Phosphopantetheine adenylyltransferase (159 aa).

Thr-10 is a binding site for substrate. ATP-binding positions include 10–11 and His-18; that span reads TF. The substrate site is built by Lys-42, Met-74, and Arg-88. ATP contacts are provided by residues 89–91, Glu-99, and 124–130; these read GLR and WSFISSS.

The protein belongs to the bacterial CoaD family. In terms of assembly, homohexamer. Mg(2+) is required as a cofactor.

The protein resides in the cytoplasm. It catalyses the reaction (R)-4'-phosphopantetheine + ATP + H(+) = 3'-dephospho-CoA + diphosphate. Its pathway is cofactor biosynthesis; coenzyme A biosynthesis; CoA from (R)-pantothenate: step 4/5. Reversibly transfers an adenylyl group from ATP to 4'-phosphopantetheine, yielding dephospho-CoA (dPCoA) and pyrophosphate. The sequence is that of Phosphopantetheine adenylyltransferase from Yersinia enterocolitica serotype O:8 / biotype 1B (strain NCTC 13174 / 8081).